The chain runs to 48 residues: uncharacterized protein (48 aa).

The chain crosses the membrane as a helical span at residues 6-26; that stretch reads IILLMIVCLVVSVLVVVWIIL.

The protein localises to the host membrane. This is an uncharacterized protein from Spiroplasma melliferum (SpV4).